Here is a 208-residue protein sequence, read N- to C-terminus: MQVLHLDSSILGDASASRILTAAIVDELRRDNPGATVIHRDLAVEAIPHLDGAIAAGFRATGADGFDAVTLAEHARSEALVGELLASDVIVVGAPMYNFSVPSQLKAWIDRVAQAGRTFKYTETGPVGLTGGKKVIVASTRGGMYSAGPTAAMDFQEAYLKTVFGFLGITDVQFVRAERLAMGPDARAQALEAAHAAMHDVVNQAIAA.

Residues S9, 15–17 (SAS), 96–99 (MYNF), and 140–143 (TRGG) each bind FMN.

The protein belongs to the azoreductase type 1 family. As to quaternary structure, homodimer. The cofactor is FMN.

The enzyme catalyses 2 a quinone + NADH + H(+) = 2 a 1,4-benzosemiquinone + NAD(+). The catalysed reaction is N,N-dimethyl-1,4-phenylenediamine + anthranilate + 2 NAD(+) = 2-(4-dimethylaminophenyl)diazenylbenzoate + 2 NADH + 2 H(+). Functionally, quinone reductase that provides resistance to thiol-specific stress caused by electrophilic quinones. In terms of biological role, also exhibits azoreductase activity. Catalyzes the reductive cleavage of the azo bond in aromatic azo compounds to the corresponding amines. This chain is FMN-dependent NADH:quinone oxidoreductase, found in Ralstonia nicotianae (strain ATCC BAA-1114 / GMI1000) (Ralstonia solanacearum).